The primary structure comprises 160 residues: Ribosomal RNA large subunit methyltransferase H (160 aa).

S-adenosyl-L-methionine contacts are provided by residues leucine 76, glycine 108, and phenylalanine 127 to tryptophan 132.

It belongs to the RNA methyltransferase RlmH family. As to quaternary structure, homodimer.

Its subcellular location is the cytoplasm. It carries out the reaction pseudouridine(1915) in 23S rRNA + S-adenosyl-L-methionine = N(3)-methylpseudouridine(1915) in 23S rRNA + S-adenosyl-L-homocysteine + H(+). Its function is as follows. Specifically methylates the pseudouridine at position 1915 (m3Psi1915) in 23S rRNA. This is Ribosomal RNA large subunit methyltransferase H from Bartonella tribocorum (strain CIP 105476 / IBS 506).